A 239-amino-acid chain; its full sequence is Secreted effector CFEM9 (239 aa).

The signal sequence occupies residues 1-18; the sequence is MRVLKFLSLMAMLGCTIG. The CFEM domain maps to 19 to 125; the sequence is QSGSATPGSL…DALRRREDEY (107 aa). Cystine bridges form between cysteine 43/cysteine 82, cysteine 47/cysteine 77, cysteine 57/cysteine 63, and cysteine 65/cysteine 98. Aspartate 60 is a binding site for heme. The segment covering 187 to 199 has biased composition (polar residues); it reads KSATTTEATRNTV. The segment at 187 to 216 is disordered; sequence KSATTTEATRNTVPASTTAPSPSPQLYTGN. A lipid anchor (GPI-anchor amidated glycine) is attached at glycine 215. The N-linked (GlcNAc...) asparagine glycan is linked to asparagine 216. A propeptide spans 216 to 239 (removed in mature form); the sequence is NASTSRATVSLTVVLTVAAVYLVL.

This sequence belongs to the RBT5 family.

The protein localises to the cell membrane. It is found in the secreted. It localises to the host nucleus. Its subcellular location is the host cell membrane. In terms of biological role, appears to function during host infection, and may play a role in suppressing the host immune response. The chain is Secreted effector CFEM9 from Marssonina brunnea f. sp. multigermtubi (strain MB_m1) (Marssonina leaf spot fungus).